The following is a 529-amino-acid chain: Probable feruloyl esterase B-1 (529 aa).

The signal sequence occupies residues 1-19 (MKISYFFVASLSYVSVARA). Cystine bridges form between Cys-27–Cys-75 and Cys-63–Cys-114. N-linked (GlcNAc...) asparagine glycans are attached at residues Asn-53, Asn-64, Asn-85, Asn-98, and Asn-138. 4 cysteine pairs are disulfide-bonded: Cys-187–Cys-445, Cys-256–Cys-273, Cys-282–Cys-295, and Cys-505–Cys-527. The active-site Acyl-ester intermediate is Ser-188. A glycan (N-linked (GlcNAc...) asparagine) is linked at Asn-233. 5 residues coordinate Ca(2+): Asp-257, Asp-260, Ala-262, Asp-264, and Leu-266. Asn-286, Asn-290, and Asn-354 each carry an N-linked (GlcNAc...) asparagine glycan. Catalysis depends on charge relay system residues Asp-404 and His-444.

Belongs to the tannase family.

It is found in the secreted. The catalysed reaction is feruloyl-polysaccharide + H2O = ferulate + polysaccharide.. Its function is as follows. Involved in degradation of plant cell walls. Hydrolyzes the feruloyl-arabinose ester bond in arabinoxylans as well as the feruloyl-galactose and feruloyl-arabinose ester bonds in pectin. The sequence is that of Probable feruloyl esterase B-1 (faeB-1) from Aspergillus terreus (strain NIH 2624 / FGSC A1156).